The primary structure comprises 264 residues: Thymidylate synthase (264 aa).

DUMP is bound at residue arginine 21. Residue histidine 51 coordinates (6R)-5,10-methylene-5,6,7,8-tetrahydrofolate. 126–127 (RR) lines the dUMP pocket. The active-site Nucleophile is the cysteine 146. Residues 166 to 169 (RSAD), asparagine 177, and 207 to 209 (HLY) each bind dUMP. Aspartate 169 serves as a coordination point for (6R)-5,10-methylene-5,6,7,8-tetrahydrofolate. Alanine 263 provides a ligand contact to (6R)-5,10-methylene-5,6,7,8-tetrahydrofolate.

This sequence belongs to the thymidylate synthase family. Bacterial-type ThyA subfamily. Homodimer.

Its subcellular location is the cytoplasm. It catalyses the reaction dUMP + (6R)-5,10-methylene-5,6,7,8-tetrahydrofolate = 7,8-dihydrofolate + dTMP. It participates in pyrimidine metabolism; dTTP biosynthesis. Its function is as follows. Catalyzes the reductive methylation of 2'-deoxyuridine-5'-monophosphate (dUMP) to 2'-deoxythymidine-5'-monophosphate (dTMP) while utilizing 5,10-methylenetetrahydrofolate (mTHF) as the methyl donor and reductant in the reaction, yielding dihydrofolate (DHF) as a by-product. This enzymatic reaction provides an intracellular de novo source of dTMP, an essential precursor for DNA biosynthesis. This Allorhizobium ampelinum (strain ATCC BAA-846 / DSM 112012 / S4) (Agrobacterium vitis (strain S4)) protein is Thymidylate synthase.